Reading from the N-terminus, the 456-residue chain is Cyclic AMP-responsive element-binding protein 3-like protein 3 (456 aa).

2 disordered regions span residues M1–I20 and G47–C120. At M1 to T317 the chain is on the cytoplasmic side. Over residues D71 to G85 the composition is skewed to polar residues. In terms of domain architecture, bZIP spans M238–L301. The interval K240–R269 is basic motif. Residues L280 to L301 form a leucine-zipper region. K289 participates in a covalent cross-link: Glycyl lysine isopeptide (Lys-Gly) (interchain with G-Cter in ubiquitin). Residues C318–A338 form a helical; Signal-anchor for type II membrane protein membrane-spanning segment. Topologically, residues S339–L456 are lumenal. Disordered regions lie at residues R365–S423 and C435–L456. Residues N408 and N415 are each glycosylated (N-linked (GlcNAc...) asparagine).

This sequence belongs to the bZIP family. ATF subfamily. As to quaternary structure, binds DNA as a dimer. May form homodimers. Interacts with ATF6. Interacts with SYNV1/HRD1; this interaction leads to CREB3L3 ubiquitination and proteasomal degradation. Post-translationally, controlled by regulated intramembrane proteolysis (RIP). Following ER stress a fragment containing the cytoplasmic transcription factor domain is released by proteolysis. The cleavage seems to be performed sequentially by site-1 and site-2 proteases (PS1 and PS2). N-glycosylation is required for optimal proteolytic activation. In terms of processing, ubiquitinated at Lys-289 by SYNV1/HRD1 via 'Lys-27'-linked ubiquitin.

Its subcellular location is the endoplasmic reticulum membrane. The protein resides in the nucleus. Its function is as follows. Transcription factor that may act during endoplasmic reticulum stress by activating unfolded protein response target genes. Activated in response to cAMP stimulation. In vitro, binds the cAMP response element (CRE). Activates transcription through box-B element and CRE. Seems to function synergistically with ATF6. In acute inflammatory response, may activate expression of acute phase response (APR) genes. May be involved in growth suppression. Regulates FGF21 transcription. Plays a crucial role in the regulation of triglyceride metabolism and is required for the maintenance of normal plasma triglyceride concentrations. This chain is Cyclic AMP-responsive element-binding protein 3-like protein 3 (CREB3L3), found in Bos taurus (Bovine).